A 158-amino-acid chain; its full sequence is Non-secretory ribonuclease (158 aa).

Residues 1-27 form the signal peptide; it reads MVPKLFTSQICLLLLLGLLGVEGSLHA. His-42 functions as the Proton acceptor in the catalytic mechanism. 4 disulfide bridges follow: Cys-50-Cys-110, Cys-64-Cys-121, Cys-82-Cys-136, and Cys-89-Cys-98. Residue Tyr-60 is modified to 3'-nitrotyrosine. 65–69 contributes to the substrate binding site; that stretch reads KNQNT. Asn-86, Asn-92, and Asn-111 each carry an N-linked (GlcNAc...) asparagine glycan. His-153 functions as the Proton donor in the catalytic mechanism.

This sequence belongs to the pancreatic ribonuclease family. In terms of assembly, interacts with and forms a tight 1:1 complex with RNH1. Dimerization of two such complexes may occur.

Its subcellular location is the lysosome. The protein localises to the cytoplasmic granule. The enzyme catalyses an [RNA] containing cytidine + H2O = an [RNA]-3'-cytidine-3'-phosphate + a 5'-hydroxy-ribonucleotide-3'-[RNA].. It catalyses the reaction an [RNA] containing uridine + H2O = an [RNA]-3'-uridine-3'-phosphate + a 5'-hydroxy-ribonucleotide-3'-[RNA].. Functionally, this is a non-secretory ribonuclease. It is a pyrimidine specific nuclease with a slight preference for U. Cytotoxin and helminthotoxin. Possesses a wide variety of biological activities. In Aotus trivirgatus (Three-striped night monkey), this protein is Non-secretory ribonuclease (RNASE2).